The sequence spans 66 residues: Heat-stable enterotoxin (66 aa).

The signal sequence occupies residues 1–19 (MKKIVFVLVLMLSSFGTFG). Positions 20–50 (QETASRQFGDAFSTPIAAEVNKKACDTELPP) are excised as a propeptide. Disulfide bonds link C54–C59, C55–C63, and C58–C66.

This sequence belongs to the heat-stable enterotoxin family.

Its subcellular location is the secreted. In terms of biological role, toxin which activates the particulate form of guanylate cyclase and increases cyclic GMP levels within the host intestinal epithelial cells. This chain is Heat-stable enterotoxin (yst), found in Yersinia kristensenii.